We begin with the raw amino-acid sequence, 423 residues long: Phosphoribosylamine--glycine ligase (423 aa).

In terms of domain architecture, ATP-grasp spans 107-314; sequence KAFMAKYNIP…LSDLVEAAID (208 aa). 133–194 is a binding site for ATP; sequence VNQKGAPIVI…EDFLQGEEAS (62 aa). Positions 284 and 286 each coordinate Mg(2+).

The protein belongs to the GARS family. Mg(2+) is required as a cofactor. Mn(2+) serves as cofactor.

It carries out the reaction 5-phospho-beta-D-ribosylamine + glycine + ATP = N(1)-(5-phospho-beta-D-ribosyl)glycinamide + ADP + phosphate + H(+). It functions in the pathway purine metabolism; IMP biosynthesis via de novo pathway; N(1)-(5-phospho-D-ribosyl)glycinamide from 5-phospho-alpha-D-ribose 1-diphosphate: step 2/2. The sequence is that of Phosphoribosylamine--glycine ligase from Neisseria meningitidis serogroup B (strain ATCC BAA-335 / MC58).